The primary structure comprises 71 residues: UPF0352 protein Asuc_0778 (71 aa).

The protein belongs to the UPF0352 family.

This chain is UPF0352 protein Asuc_0778, found in Actinobacillus succinogenes (strain ATCC 55618 / DSM 22257 / CCUG 43843 / 130Z).